The sequence spans 226 residues: V-type proton ATPase subunit E (226 aa).

This sequence belongs to the V-ATPase E subunit family. In terms of assembly, V-ATPase is a heteromultimeric enzyme made up of two complexes: the ATP-hydrolytic V1 complex and the proton translocation V0 complex. The V1 complex consists of three catalytic AB heterodimers that form a heterohexamer, three peripheral stalks each consisting of EG heterodimers, one central rotor including subunits D and F, and the regulatory subunits C and H. The proton translocation complex V0 consists of the proton transport subunit a, a ring of proteolipid subunits c9c'', rotary subunit d, subunits e and f, and the accessory subunits vah-19/Ac45 and vah-20/PRR. Expressed in the excretory cell and syncytial hypodermal cells (at protein level). Expressed in the intestine (at protein level).

Its subcellular location is the cytoplasm. The protein resides in the apical cell membrane. Its function is as follows. Subunit of the V1 complex of vacuolar(H+)-ATPase (V-ATPase), a multisubunit enzyme composed of a peripheral complex (V1) that hydrolyzes ATP and a membrane integral complex (V0) that translocates protons. V-ATPase is responsible for acidifying and maintaining the pH of intracellular compartments and in some cell types, is targeted to the plasma membrane, where it is responsible for acidifying the extracellular environment. Regulates pH homeostasis in the intestine. Probably by regulating cytoplasmic pH, required for cell survival in the intestine and hypodermis. Involved in receptor-mediated endocytosis. Involved in embryogenesis and larval development. This is V-type proton ATPase subunit E from Caenorhabditis elegans.